The sequence spans 834 residues: RNA-binding protein 12B-B (834 aa).

The region spanning 154 to 229 is the RRM 1 domain; that stretch reads PYLFLRGLPY…RFIEVMQGSE (76 aa). Positions 237-277 are disordered; the sequence is GTATEGGDTPRMRSEEHSPSRRINGRHFRKRSHSKSPRARS. Over residues 244-255 the composition is skewed to basic and acidic residues; it reads DTPRMRSEEHSP. The span at 259 to 277 shows a compositional bias: basic residues; that stretch reads INGRHFRKRSHSKSPRARS. 2 consecutive RRM domains span residues 283–359 and 401–478; these read FYVH…PVSR and LCIY…LISE. Disordered stretches follow at residues 546-572 and 621-643; these read GYFR…PWEE and HFRR…RSRE. The span at 550–572 shows a compositional bias: basic and acidic residues; that stretch reads QSDRCSPEDFRHSPEDYRHPWEE. The residue at position 701 (Ser701) is a Phosphoserine. One can recognise an RRM 4 domain in the interval 758–834; sequence IRVMISNLPF…GPRKVKLSLL (77 aa).

In Mus musculus (Mouse), this protein is RNA-binding protein 12B-B (Rbm12b2).